We begin with the raw amino-acid sequence, 806 residues long: Sucrose synthase (806 aa).

A GT-B glycosyltransferase region spans residues 275–752; the sequence is MVFNVVILSP…GLQRIEEKYT (478 aa).

Belongs to the glycosyltransferase 1 family. Plant sucrose synthase subfamily.

The enzyme catalyses an NDP-alpha-D-glucose + D-fructose = a ribonucleoside 5'-diphosphate + sucrose + H(+). In terms of biological role, sucrose-cleaving enzyme that provides UDP-glucose and fructose for various metabolic pathways. In Vicia faba (Broad bean), this protein is Sucrose synthase (SUCS).